A 74-amino-acid polypeptide reads, in one-letter code: O-conotoxin GeXXXIA (74 aa).

The signal sequence occupies residues 1–22 (MKLTCVLIITVLFLTACQLTTA). Residues 23-33 (VTYSRGEHKHR) constitute a propeptide that is removed on maturation.

The protein belongs to the conotoxin O1 superfamily. In terms of assembly, homodimer; disulfide-linked. In terms of processing, may contain 2 intrachain disulfide bonds and probably one interchain disulfide bond forming the homodimer. Post-translationally, the disulfide pairing is not important for activity towards the different nAChR subtypes, since this peptide without disulfide bond or with different disulfide bonds shows the same activity. As to expression, expressed by the venom duct.

It is found in the secreted. In terms of biological role, the activity of this natural homodimer has not been tested due to low abundance. The synthetic linear peptide has been refolded, giving 4 different monomeric isomers (m1 to m4) with 2 disulfide bonds each. All isomers potently inhibit rat alpha-1-beta-1-delta-epsilon/CHRNA1-CHRNB1-CHRND-CHRNE and human alpha-9-alpha-10/CHRNA9-CHRNA10 nicotinic acetylcholine receptors (nAChR). In addition, they show a modest inhibition at human alpha-3-beta-2/CHRNA3-CHRNB2, alpha-3-beta-4/CHRNA3-CHRNB4, alpha-7/CHRNA7, and alpha-4-beta-4/CHRNA4-CHRNB4. The synthetic monomer peptide without disulfide bonds shows a potent activity on alpha-9-alpha-10/CHRNA9 and CHRNA10 (IC(50)=16.2 nM). This linear peptide does not act as a competitive antagonist, or as a channel pore blocker of nAChR. In Conus generalis (General cone), this protein is O-conotoxin GeXXXIA.